A 129-amino-acid chain; its full sequence is HTH-type transcriptional regulator GlnR (129 aa).

The HTH merR-type domain occupies 10 to 78; the sequence is LFPIGIVMDL…MAGIKQVLLM (69 aa). The segment at residues 13–32 is a DNA-binding region (H-T-H motif); the sequence is IGIVMDLTQLSARQIRYYEE.

In terms of assembly, homodimer under conditions of nitrogen excess. Monomer under conditions of nitrogen-limited. Interacts with feedback-inhibited GlnA in order to stabilizes GlnR-DNA complex.

Under conditions of nitrogen excess, the DNA binding activity of GlnR is activated by a transient interaction with feedback-inhibited GlnA. Under conditions of nitrogen-limited, GlnR is autoinhibited by its C-terminal region. In terms of biological role, transcription repressor during nitrogen excess. On the contrary of the MerR members, which require longer DNA sites for high-affinity binding, GlnR requires a DNA sequence of 17 nucleotides as minimal binding site. The sequence is that of HTH-type transcriptional regulator GlnR from Bacillus anthracis.